The chain runs to 35 residues: Tamulustoxin (35 aa).

Cystine bridges form between Cys2–Cys22, Cys7–Cys31, and Cys11–Cys33.

As to expression, expressed by the venom gland.

It localises to the secreted. Its function is as follows. Blocks Kv1.6/KCNA6 potassium channels. The sequence is that of Tamulustoxin from Hottentotta tamulus (Eastern Indian scorpion).